A 504-amino-acid polypeptide reads, in one-letter code: Cytochrome P450 7A1 (504 aa).

A helical transmembrane segment spans residues 4–24 (TSLIWGIAIAACCCLWLILGI). Cys-444 is a heme binding site.

The protein belongs to the cytochrome P450 family. Heme is required as a cofactor. As to expression, detected in liver.

It is found in the endoplasmic reticulum membrane. The protein resides in the microsome membrane. It catalyses the reaction cholesterol + reduced [NADPH--hemoprotein reductase] + O2 = 7alpha-hydroxycholesterol + oxidized [NADPH--hemoprotein reductase] + H2O + H(+). The catalysed reaction is 4beta-hydroxycholesterol + reduced [NADPH--hemoprotein reductase] + O2 = 4beta,7alpha-dihydroxycholesterol + oxidized [NADPH--hemoprotein reductase] + H2O + H(+). The enzyme catalyses lathosterol + reduced [NADPH--hemoprotein reductase] + O2 = 7alpha,8alpha-epoxy-5alpha-cholestan-3beta-ol + oxidized [NADPH--hemoprotein reductase] + H2O + H(+). It carries out the reaction lathosterol + reduced [NADPH--hemoprotein reductase] + O2 = 5alpha-cholestan-7-oxo-3beta-ol + oxidized [NADPH--hemoprotein reductase] + H2O + H(+). It catalyses the reaction 7-dehydrocholesterol + reduced [NADPH--hemoprotein reductase] + O2 = 7-oxocholesterol + oxidized [NADPH--hemoprotein reductase] + H2O + H(+). The catalysed reaction is (24S)-hydroxycholesterol + reduced [NADPH--hemoprotein reductase] + O2 = (24S)-7alpha-dihydroxycholesterol + oxidized [NADPH--hemoprotein reductase] + H2O + H(+). The enzyme catalyses (24R)-hydroxycholesterol + reduced [NADPH--hemoprotein reductase] + O2 = (24R)-7alpha-dihydroxycholesterol + oxidized [NADPH--hemoprotein reductase] + H2O + H(+). Its pathway is lipid metabolism; bile acid biosynthesis. It participates in steroid metabolism; cholesterol degradation. A cytochrome P450 monooxygenase involved in the metabolism of endogenous cholesterol and its oxygenated derivatives (oxysterols). Mechanistically, uses molecular oxygen inserting one oxygen atom into a substrate, and reducing the second into a water molecule, with two electrons provided by NADPH via cytochrome P450 reductase (CPR; NADPH-ferrihemoprotein reductase). Functions as a critical regulatory enzyme of bile acid biosynthesis and cholesterol homeostasis. Catalyzes the hydroxylation of carbon hydrogen bond at 7-alpha position of cholesterol, a rate-limiting step in cholesterol catabolism and bile acid biosynthesis. 7-alpha hydroxylates several oxysterols, including 4beta-hydroxycholesterol and 24-hydroxycholesterol. Catalyzes the oxidation of the 7,8 double bond of 7-dehydrocholesterol and lathosterol with direct and predominant formation of the 7-keto derivatives. The protein is Cytochrome P450 7A1 of Homo sapiens (Human).